Here is a 275-residue protein sequence, read N- to C-terminus: Pantothenate synthetase (275 aa).

Residue 26–33 (MGFLHEGH) coordinates ATP. H33 acts as the Proton donor in catalysis. (R)-pantoate is bound at residue Q57. Q57 serves as a coordination point for beta-alanine. 143-146 (GQKD) provides a ligand contact to ATP. Position 149 (Q149) interacts with (R)-pantoate. ATP is bound by residues A172 and 180–183 (RSSR).

This sequence belongs to the pantothenate synthetase family. Homodimer.

The protein resides in the cytoplasm. It carries out the reaction (R)-pantoate + beta-alanine + ATP = (R)-pantothenate + AMP + diphosphate + H(+). Its pathway is cofactor biosynthesis; (R)-pantothenate biosynthesis; (R)-pantothenate from (R)-pantoate and beta-alanine: step 1/1. Catalyzes the condensation of pantoate with beta-alanine in an ATP-dependent reaction via a pantoyl-adenylate intermediate. In Gluconobacter oxydans (strain 621H) (Gluconobacter suboxydans), this protein is Pantothenate synthetase.